A 945-amino-acid polypeptide reads, in one-letter code: MLDKYNPAEIESKHYQNWEEQGYFQPDMDLTKPSFSIQLPPPNVTGTLHMGHAFNQTIMDGLTRYYRMKGCNTAWIPGTDHAGIATQIVVERQLAAQNVSRHDLGREKFLEKVWEWKEVSGGTITQQMRRVGCSADWTREYFTMDDVRAETVTEVFVRLYEQGLIYRGKRLVNWDPVLGTAVSDLEVESVEEQGSMWHIRYPLADNPAEAVIVATTRPETLLGDVAVAVNPEDERYTHLIGKELILPLTGRTIPVIADEYVEKDFGTGCVKITPAHDFNDYEVGKRHDTRLINVFNLEAKVLANAEVFNFKGEAQLGFALPEKYAGLDRFAARKQMVADLQEQGFLVEIKPHTLMTPKGDRTGSVIEPMLTSQWFVAMSATPNGGEPDSEFKGLSLADKAKKAVDSGAVRFIPENWVNTYNQWMNNIQDWCISRQLWWGHQIPAWYDNEGNVYVARNQEEAEKQAGKTGLTREEDVLDTWFSSALVPFSTLGWPSETDELKAFLPSNVLVTGYEIIFFWVARMIMMTTHFTGKVPFKDVYIHGIVRDHEGKKMSKSEGNVIDPVDLIDGIGLEKLLVKRTTGLRKPETAPKVEEATKKLFPEGIPSMGADALRFTMASYASLGRSVNFDFKRAEGYRNFCNKIWNATNFVLMNTENQDCGYGATAAEPRGYSFPDMWIVGRLNQTIEQVTQAYETYRFDLAAETLYSFVWNDYCDWYLELAKVQLQTGCASRQRATRHTLLRVLEAALRLLHPIIPFITEELWQTVAPMCDAKTADSIMLARFPEADSGEIVQTAFEQMTVLQDLIGAVRNLRGEMGIQPNVKAPLFVESTDDLADYLKYLPMMTRLTEAQQVAALPESEDAPVAVCNGARLMLKVEIDKAAETARLSKEAEKLQKALDKLNAKLSKPGYTEKAPAHLVEKDKADLAELEDKMAKVQNQLAKLKD.

Residues 42–52 (PNVTGTLHMGH) carry the 'HIGH' region motif. Residues 552-556 (KMSKS) carry the 'KMSKS' region motif. K555 serves as a coordination point for ATP. Residues 879-945 (DKAAETARLS…VQNQLAKLKD (67 aa)) adopt a coiled-coil conformation.

Belongs to the class-I aminoacyl-tRNA synthetase family. ValS type 1 subfamily. Monomer.

Its subcellular location is the cytoplasm. The enzyme catalyses tRNA(Val) + L-valine + ATP = L-valyl-tRNA(Val) + AMP + diphosphate. Catalyzes the attachment of valine to tRNA(Val). As ValRS can inadvertently accommodate and process structurally similar amino acids such as threonine, to avoid such errors, it has a 'posttransfer' editing activity that hydrolyzes mischarged Thr-tRNA(Val) in a tRNA-dependent manner. The sequence is that of Valine--tRNA ligase from Neisseria meningitidis serogroup B (strain ATCC BAA-335 / MC58).